Here is a 543-residue protein sequence, read N- to C-terminus: Formate--tetrahydrofolate ligase (543 aa).

54–61 (TPAGEGKT) provides a ligand contact to ATP.

Belongs to the formate--tetrahydrofolate ligase family.

It catalyses the reaction (6S)-5,6,7,8-tetrahydrofolate + formate + ATP = (6R)-10-formyltetrahydrofolate + ADP + phosphate. The protein operates within one-carbon metabolism; tetrahydrofolate interconversion. This is Formate--tetrahydrofolate ligase from Thermus thermophilus (strain ATCC BAA-163 / DSM 7039 / HB27).